A 387-amino-acid chain; its full sequence is Dynactin subunit 2 (387 aa).

Coiled coils occupy residues 99 to 125, 256 to 282, and 355 to 387; these read LQRC…DTGR, SQLD…SNAT, and TGVQ…QMIK.

The protein belongs to the dynactin subunit 2 family. In terms of assembly, subunit of dynactin, a multiprotein complex associated with dynein.

It is found in the cytoplasm. It localises to the cytoskeleton. The protein localises to the membrane. Its function is as follows. Modulates cytoplasmic dynein binding to an organelle, and plays a role in prometaphase chromosome alignment and spindle organization during mitosis. The sequence is that of Dynactin subunit 2 from Anopheles gambiae (African malaria mosquito).